We begin with the raw amino-acid sequence, 659 residues long: PAN2-PAN3 deadenylation complex subunit PAN3 (659 aa).

Disordered stretches follow at residues 1–26 (MASA…AREN) and 103–132 (PKAA…QENI). Residues 26 to 55 (NAKDTLCRNVTIYGRCRYEDKGCAFNHDPL) form a C3H1-type zinc finger. A compositionally biased stretch (polar residues) spans 115-132 (SVASRSNTSTPNSRQENI). The interval 262–522 (QTLPNTQLPA…NIDIFITGIS (261 aa)) is pseudokinase domain. Residues R314, 363 to 370 (DYYPLSKT), and 422 to 423 (SK) each bind ATP. Residues 523 to 561 (SQLMSTFDSALHLDDQLTSDLSRELENGRLVRLMTKLNL) adopt a coiled-coil conformation. A knob domain region spans residues 562–659 (VNERPEYEHD…ALLKPARRMH (98 aa)).

Belongs to the protein kinase superfamily. PAN3 family. Homodimer. Forms a heterotrimer with a catalytic subunit pan2 to form the poly(A)-nuclease (PAN) deadenylation complex. Interacts (via PAM-2 motif) with poly(A)-binding protein pab1 (via PABC domain), conferring substrate specificity of the enzyme complex.

The protein localises to the cytoplasm. Its function is as follows. Regulatory subunit of the poly(A)-nuclease (PAN) deadenylation complex, one of two cytoplasmic mRNA deadenylases involved in mRNA turnover. PAN specifically shortens poly(A) tails of RNA and the activity is stimulated by poly(A)-binding protein pab1. PAN deadenylation is followed by rapid degradation of the shortened mRNA tails by the CCR4-NOT complex. Deadenylated mRNAs are then degraded by two alternative mechanisms, namely exosome-mediated 3'-5' exonucleolytic degradation, or deadenylation-dependent mRNA decaping and subsequent 5'-3' exonucleolytic degradation by xrn1. May also be involved in post-transcriptional maturation of mRNA poly(A) tails. pan3 acts as a positive regulator for PAN activity, recruiting the catalytic subunit pan2 to mRNA via its interaction with RNA and with pab1. The protein is PAN2-PAN3 deadenylation complex subunit PAN3 of Aspergillus clavatus (strain ATCC 1007 / CBS 513.65 / DSM 816 / NCTC 3887 / NRRL 1 / QM 1276 / 107).